Reading from the N-terminus, the 156-residue chain is MPRRREIAKRVILPDPKYKNILVAKFVNNLLKEGKKSIAESILYGAFDLIEKKAKESPVELFERAVNNVKPVIEVKSRRVGGSTYQVPTEVAASRRVALAIRWIISNAKDRAEKTMREKLAGEFIDAANNRGGSIKKRESVHKMAEANKAFAHYRF.

This sequence belongs to the universal ribosomal protein uS7 family. As to quaternary structure, part of the 30S ribosomal subunit. Contacts proteins S9 and S11.

In terms of biological role, one of the primary rRNA binding proteins, it binds directly to 16S rRNA where it nucleates assembly of the head domain of the 30S subunit. Is located at the subunit interface close to the decoding center, probably blocks exit of the E-site tRNA. This is Small ribosomal subunit protein uS7 from Syntrophus aciditrophicus (strain SB).